The chain runs to 431 residues: Glutamate-1-semialdehyde 2,1-aminomutase (431 aa).

Lysine 269 is modified (N6-(pyridoxal phosphate)lysine).

This sequence belongs to the class-III pyridoxal-phosphate-dependent aminotransferase family. HemL subfamily. In terms of assembly, homodimer. It depends on pyridoxal 5'-phosphate as a cofactor.

The protein localises to the cytoplasm. The catalysed reaction is (S)-4-amino-5-oxopentanoate = 5-aminolevulinate. Its pathway is porphyrin-containing compound metabolism; protoporphyrin-IX biosynthesis; 5-aminolevulinate from L-glutamyl-tRNA(Glu): step 2/2. The sequence is that of Glutamate-1-semialdehyde 2,1-aminomutase from Tolumonas auensis (strain DSM 9187 / NBRC 110442 / TA 4).